Consider the following 1123-residue polypeptide: Leucine--tRNA ligase, cytoplasmic (1123 aa).

A 'HIGH' region motif is present at residues 84 to 94 (PYMNGRLHAGH). Positions 757–761 (KMSKS) match the 'KMSKS' region motif. Lysine 760 lines the ATP pocket.

Belongs to the class-I aminoacyl-tRNA synthetase family.

It localises to the cytoplasm. The enzyme catalyses tRNA(Leu) + L-leucine + ATP = L-leucyl-tRNA(Leu) + AMP + diphosphate. This is Leucine--tRNA ligase, cytoplasmic (leu-6) from Neurospora crassa (strain ATCC 24698 / 74-OR23-1A / CBS 708.71 / DSM 1257 / FGSC 987).